A 103-amino-acid polypeptide reads, in one-letter code: Small ribosomal subunit protein uS10 (103 aa).

This sequence belongs to the universal ribosomal protein uS10 family. As to quaternary structure, part of the 30S ribosomal subunit.

Involved in the binding of tRNA to the ribosomes. The polypeptide is Small ribosomal subunit protein uS10 (Idiomarina loihiensis (strain ATCC BAA-735 / DSM 15497 / L2-TR)).